We begin with the raw amino-acid sequence, 214 residues long: Ornithine decarboxylase antizyme 1 (214 aa).

Belongs to the ODC antizyme family. As to quaternary structure, interacts with ODC1 and thereby sterically blocks ODC homodimerization.

In terms of biological role, ornithine decarboxylase (ODC) antizyme protein that negatively regulates ODC activity and intracellular polyamine biosynthesis and uptake in response to increased intracellular polyamine levels. Binds to ODC monomers, inhibiting the assembly of the functional ODC homodimer, and targets the monomers for ubiquitin-independent proteolytic destruction by the 26S proteasome. The chain is Ornithine decarboxylase antizyme 1 (oaz1a) from Danio rerio (Zebrafish).